The following is a 144-amino-acid chain: UPF0735 ACT domain-containing protein LSEI_1046 (144 aa).

The ACT domain maps to 68-143 (VISLMLHHDR…GVSDVHLVSV (76 aa)).

This sequence belongs to the UPF0735 family.

The protein is UPF0735 ACT domain-containing protein LSEI_1046 of Lacticaseibacillus paracasei (strain ATCC 334 / BCRC 17002 / CCUG 31169 / CIP 107868 / KCTC 3260 / NRRL B-441) (Lactobacillus paracasei).